A 230-amino-acid chain; its full sequence is Ureidoacrylate amidohydrolase RutB (230 aa).

Asp-23 functions as the Proton acceptor in the catalytic mechanism. Lys-132 is an active-site residue. Cys-165 acts as the Nucleophile in catalysis.

It belongs to the isochorismatase family. RutB subfamily.

It carries out the reaction (Z)-3-ureidoacrylate + H2O + H(+) = (Z)-3-aminoacrylate + NH4(+) + CO2. The catalysed reaction is (Z)-3-ureidoacrylate + H2O = (Z)-3-aminoacrylate + carbamate + H(+). It catalyses the reaction (Z)-2-methylureidoacrylate + H2O + H(+) = (Z)-2-methylaminoacrylate + NH4(+) + CO2. In terms of biological role, hydrolyzes ureidoacrylate to form aminoacrylate and carbamate. The carbamate hydrolyzes spontaneously, thereby releasing one of the nitrogen atoms of the pyrimidine ring as ammonia and one of its carbon atoms as CO2. This Yersinia enterocolitica serotype O:8 / biotype 1B (strain NCTC 13174 / 8081) protein is Ureidoacrylate amidohydrolase RutB.